The primary structure comprises 707 residues: Elongation factor G (707 aa).

The region spanning 8 to 288 (QFTRNIGIMA…AVCKFLPSPA (281 aa)) is the tr-type G domain. GTP is bound by residues 17–24 (AHIDAGKT), 85–89 (DTPGH), and 139–142 (NKMD). The disordered stretch occupies residues 288 to 308 (ADTPTVEGTDPSDPNKVIERK).

It belongs to the TRAFAC class translation factor GTPase superfamily. Classic translation factor GTPase family. EF-G/EF-2 subfamily.

The protein localises to the cytoplasm. Its function is as follows. Catalyzes the GTP-dependent ribosomal translocation step during translation elongation. During this step, the ribosome changes from the pre-translocational (PRE) to the post-translocational (POST) state as the newly formed A-site-bound peptidyl-tRNA and P-site-bound deacylated tRNA move to the P and E sites, respectively. Catalyzes the coordinated movement of the two tRNA molecules, the mRNA and conformational changes in the ribosome. The sequence is that of Elongation factor G from Porphyromonas gingivalis (strain ATCC 33277 / DSM 20709 / CIP 103683 / JCM 12257 / NCTC 11834 / 2561).